A 1076-amino-acid polypeptide reads, in one-letter code: Bifunctional glutamine synthetase adenylyltransferase/adenylyl-removing enzyme (1076 aa).

Residues 1 to 521 form an adenylyl removase region; sequence MESSMFKPSS…LHLDIYYRPM (521 aa). Residues 524-1076 form an adenylyl transferase region; that stretch reads VNAQMENDQI…LERNRRRAQR (553 aa). Low complexity predominate over residues 1041–1056; that stretch reads ATATASAATPQPQTAP. A disordered region spans residues 1041–1076; it reads ATATASAATPQPQTAPRPRMHVIAPRLERNRRRAQR.

This sequence belongs to the GlnE family. The cofactor is Mg(2+).

It carries out the reaction [glutamine synthetase]-O(4)-(5'-adenylyl)-L-tyrosine + phosphate = [glutamine synthetase]-L-tyrosine + ADP. The enzyme catalyses [glutamine synthetase]-L-tyrosine + ATP = [glutamine synthetase]-O(4)-(5'-adenylyl)-L-tyrosine + diphosphate. Functionally, involved in the regulation of glutamine synthetase GlnA, a key enzyme in the process to assimilate ammonia. When cellular nitrogen levels are high, the C-terminal adenylyl transferase (AT) inactivates GlnA by covalent transfer of an adenylyl group from ATP to specific tyrosine residue of GlnA, thus reducing its activity. Conversely, when nitrogen levels are low, the N-terminal adenylyl removase (AR) activates GlnA by removing the adenylyl group by phosphorolysis, increasing its activity. The regulatory region of GlnE binds the signal transduction protein PII (GlnB) which indicates the nitrogen status of the cell. The polypeptide is Bifunctional glutamine synthetase adenylyltransferase/adenylyl-removing enzyme (Bifidobacterium longum subsp. infantis (strain ATCC 15697 / DSM 20088 / JCM 1222 / NCTC 11817 / S12)).